The following is a 37-amino-acid chain: Large ribosomal subunit protein bL36 (37 aa).

Belongs to the bacterial ribosomal protein bL36 family.

The chain is Large ribosomal subunit protein bL36 from Clostridium kluyveri (strain NBRC 12016).